A 327-amino-acid polypeptide reads, in one-letter code: GMP reductase (327 aa).

Residue cysteine 176 is the Thioimidate intermediate of the active site. 205-228 contacts NADP(+); it reads IIADGGIRTHGDIAKSIRFGASMV.

The protein belongs to the IMPDH/GMPR family. GuaC type 2 subfamily.

The catalysed reaction is IMP + NH4(+) + NADP(+) = GMP + NADPH + 2 H(+). Catalyzes the irreversible NADPH-dependent deamination of GMP to IMP. It functions in the conversion of nucleobase, nucleoside and nucleotide derivatives of G to A nucleotides, and in maintaining the intracellular balance of A and G nucleotides. In Streptococcus suis (strain 98HAH33), this protein is GMP reductase.